Reading from the N-terminus, the 130-residue chain is Small ribosomal subunit protein uS11 (130 aa).

Belongs to the universal ribosomal protein uS11 family. Part of the 30S ribosomal subunit. Interacts with proteins S7 and S18. Binds to IF-3.

Its function is as follows. Located on the platform of the 30S subunit, it bridges several disparate RNA helices of the 16S rRNA. Forms part of the Shine-Dalgarno cleft in the 70S ribosome. This is Small ribosomal subunit protein uS11 from Acholeplasma laidlawii (strain PG-8A).